We begin with the raw amino-acid sequence, 295 residues long: Translational activator of cytochrome c oxidase 1 (295 aa).

N6-acetyllysine is present on Lys162. Positions 190–225 form a coiled coil; the sequence is VEDREKKAVNLERALELAIEAGAEDVREAEDEEEEK.

It belongs to the TACO1 family.

It is found in the mitochondrion. Functionally, acts as a translational activator of mitochondrially-encoded cytochrome c oxidase 1. The chain is Translational activator of cytochrome c oxidase 1 from Rattus norvegicus (Rat).